Consider the following 680-residue polypeptide: DNA-directed RNA polymerase subunit beta' (680 aa).

The Zn(2+) site is built by C69, C71, C87, and C90. D489, D491, and D493 together coordinate Mg(2+).

It belongs to the RNA polymerase beta' chain family. RpoC1 subfamily. As to quaternary structure, in plastids the minimal PEP RNA polymerase catalytic core is composed of four subunits: alpha, beta, beta', and beta''. When a (nuclear-encoded) sigma factor is associated with the core the holoenzyme is formed, which can initiate transcription. Requires Mg(2+) as cofactor. Zn(2+) is required as a cofactor.

Its subcellular location is the plastid. The protein localises to the chloroplast. It carries out the reaction RNA(n) + a ribonucleoside 5'-triphosphate = RNA(n+1) + diphosphate. In terms of biological role, DNA-dependent RNA polymerase catalyzes the transcription of DNA into RNA using the four ribonucleoside triphosphates as substrates. This chain is DNA-directed RNA polymerase subunit beta', found in Cucumis sativus (Cucumber).